The primary structure comprises 285 residues: Ribose-phosphate pyrophosphokinase (285 aa).

ATP is bound by residues 34-36 (DGE) and 91-92 (RQ). His-124 and Asp-162 together coordinate Mg(2+). Residue Lys-185 is part of the active site. D-ribose 5-phosphate is bound by residues Arg-187, Asp-211, and 215-219 (STGGT).

This sequence belongs to the ribose-phosphate pyrophosphokinase family. Class III (archaeal) subfamily. Mg(2+) serves as cofactor.

Its subcellular location is the cytoplasm. The catalysed reaction is D-ribose 5-phosphate + ATP = 5-phospho-alpha-D-ribose 1-diphosphate + AMP + H(+). The protein operates within metabolic intermediate biosynthesis; 5-phospho-alpha-D-ribose 1-diphosphate biosynthesis; 5-phospho-alpha-D-ribose 1-diphosphate from D-ribose 5-phosphate (route I): step 1/1. In terms of biological role, involved in the biosynthesis of the central metabolite phospho-alpha-D-ribosyl-1-pyrophosphate (PRPP) via the transfer of pyrophosphoryl group from ATP to 1-hydroxyl of ribose-5-phosphate (Rib-5-P). The chain is Ribose-phosphate pyrophosphokinase from Pyrococcus abyssi (strain GE5 / Orsay).